The primary structure comprises 280 residues: 4-deoxy-L-threo-5-hexosulose-uronate ketol-isomerase (280 aa).

Zn(2+)-binding residues include histidine 198, histidine 200, glutamate 205, and histidine 247.

It belongs to the KduI family. The cofactor is Zn(2+).

Its subcellular location is the cytoplasm. The catalysed reaction is 5-dehydro-4-deoxy-D-glucuronate = 3-deoxy-D-glycero-2,5-hexodiulosonate. Functionally, isomerase involved in ulvan degradation. Ulvan is the main polysaccharide component of the Ulvales (green seaweed) cell wall. It is composed of disaccharide building blocks comprising 3-sulfated rhamnose (Rha3S) linked to D-glucuronic acid (GlcA), L-iduronic acid (IduA), or D-xylose (Xyl). Catalyzes the isomerization of 5-dehydro-4-deoxy-D-glucuronate to 3-deoxy-D-glycero-2,5-hexodiulosonate. The protein is 4-deoxy-L-threo-5-hexosulose-uronate ketol-isomerase of Formosa agariphila (strain DSM 15362 / KCTC 12365 / LMG 23005 / KMM 3901 / M-2Alg 35-1).